The sequence spans 217 residues: 3,4-dihydroxy-2-butanone 4-phosphate synthase (217 aa).

Residues 37–38, aspartate 42, 150–154, and glutamate 174 each bind D-ribulose 5-phosphate; these read RE and RGGHT. Glutamate 38 lines the Mg(2+) pocket. Histidine 153 contacts Mg(2+).

Belongs to the DHBP synthase family. Homodimer. Mg(2+) is required as a cofactor. Mn(2+) serves as cofactor.

It catalyses the reaction D-ribulose 5-phosphate = (2S)-2-hydroxy-3-oxobutyl phosphate + formate + H(+). The protein operates within cofactor biosynthesis; riboflavin biosynthesis; 2-hydroxy-3-oxobutyl phosphate from D-ribulose 5-phosphate: step 1/1. Its function is as follows. Catalyzes the conversion of D-ribulose 5-phosphate to formate and 3,4-dihydroxy-2-butanone 4-phosphate. The sequence is that of 3,4-dihydroxy-2-butanone 4-phosphate synthase from Salmonella paratyphi A (strain ATCC 9150 / SARB42).